Consider the following 549-residue polypeptide: Glucose-6-phosphate isomerase (549 aa).

The active-site Proton donor is Glu-353. Active-site residues include His-384 and Lys-513.

It belongs to the GPI family.

The protein resides in the cytoplasm. The enzyme catalyses alpha-D-glucose 6-phosphate = beta-D-fructose 6-phosphate. Its pathway is carbohydrate biosynthesis; gluconeogenesis. The protein operates within carbohydrate degradation; glycolysis; D-glyceraldehyde 3-phosphate and glycerone phosphate from D-glucose: step 2/4. In terms of biological role, catalyzes the reversible isomerization of glucose-6-phosphate to fructose-6-phosphate. The sequence is that of Glucose-6-phosphate isomerase from Brucella anthropi (strain ATCC 49188 / DSM 6882 / CCUG 24695 / JCM 21032 / LMG 3331 / NBRC 15819 / NCTC 12168 / Alc 37) (Ochrobactrum anthropi).